The chain runs to 444 residues: Probable D-serine dehydratase (444 aa).

The residue at position 118 (lysine 118) is an N6-(pyridoxal phosphate)lysine.

This sequence belongs to the serine/threonine dehydratase family. DsdA subfamily. The cofactor is pyridoxal 5'-phosphate.

The catalysed reaction is D-serine = pyruvate + NH4(+). The protein is Probable D-serine dehydratase of Desulfitobacterium hafniense (strain Y51).